The following is a 472-amino-acid chain: MIYIFGSGLAGLSAAISLHKSGYKVTIISKKINGGSSYWAKGGIAAAVGNDDSPELHKIDTLEVGDGLCDSKTVDYVTREIRYVVSTVEKWGFKFDDDLRLEGGHSKRRILHKTDDTGREITNFLLNLAKKKGINLIEDKLLALKVKDGKVAGFITEKGGSFDAEKVVLATGGYGYLFKFTSNPSTNIGDGIAIAFKAGALVSDTEFVQFHPTVTTFDGQAYLLTETLRGEGAILVNERNERFVFKYDSRGELAPRDVLSRAIYDQYKKGHTVYIDLSPIEDFDRKFPILSNYVKRYGKRLQVFPGVHYTIGGIRVNTRGESNIKGLYAIGEVTDTGLHGANRLASNSLAEDLVYGVNLVRYIDNWEGLSIDDVKEVIEVRLRNSSNRLSLEEIREYNWNYLGIVRNGEGLDKLVKIYESNDTFNDNASLVSLLSAKGALLRTESRGAHYREDYPNKSWEDGKRIYFMVSRN.

FAD is bound by residues S7–A10, S36–G43, and D190. Residue R256 is the Proton donor/acceptor of the active site. FAD-binding positions include E332 and S348–L349.

Belongs to the FAD-dependent oxidoreductase 2 family. NadB subfamily. The cofactor is FAD.

The protein localises to the cytoplasm. It carries out the reaction L-aspartate + O2 = iminosuccinate + H2O2. It participates in cofactor biosynthesis; NAD(+) biosynthesis; iminoaspartate from L-aspartate (oxidase route): step 1/1. Catalyzes the oxidation of L-aspartate to iminoaspartate, the first step in the de novo biosynthesis of NAD(+). This Saccharolobus solfataricus (strain ATCC 35092 / DSM 1617 / JCM 11322 / P2) (Sulfolobus solfataricus) protein is L-aspartate oxidase (nadB).